Here is a 338-residue protein sequence, read N- to C-terminus: MRVLGIETSCDETGIAVYDDKLGLLSHALYSQVKLHADYGGVVPELASRDHVRKIVPLIRQALKNANTDIADIDGIAYTKGPGLIGALLVGACVGRSLAFAWNKPAIGVHHMEGHLLAPMLEEDAPEFPFVALLVSGGHSMLVKVDGIGLYAVLGESVDDAAGEAFDKTAKLMGLDYPGGPRLAKLAAKGEPAGYQFPRPMTDRPGLDFSFSGLKTFTANTIAAEPDDEQTRANIARAFEEAVVDTLAIKCRRALKQTGYNRLVIAGGVSANTRLRETLAEMMTSIGGRVYYPRGEFCTDNGAMIAFAGLQRLKAGQQEDLAVKGQPRWPLDTLPPLA.

The Fe cation site is built by His-111 and His-115. Substrate is bound by residues 134–138, Asp-167, Gly-180, and Asn-272; that span reads LVSGG. A Fe cation-binding site is contributed by Asp-300.

Belongs to the KAE1 / TsaD family. The cofactor is Fe(2+).

The protein localises to the cytoplasm. It catalyses the reaction L-threonylcarbamoyladenylate + adenosine(37) in tRNA = N(6)-L-threonylcarbamoyladenosine(37) in tRNA + AMP + H(+). Its function is as follows. Required for the formation of a threonylcarbamoyl group on adenosine at position 37 (t(6)A37) in tRNAs that read codons beginning with adenine. Is involved in the transfer of the threonylcarbamoyl moiety of threonylcarbamoyl-AMP (TC-AMP) to the N6 group of A37, together with TsaE and TsaB. TsaD likely plays a direct catalytic role in this reaction. The protein is tRNA N6-adenosine threonylcarbamoyltransferase of Shewanella oneidensis (strain ATCC 700550 / JCM 31522 / CIP 106686 / LMG 19005 / NCIMB 14063 / MR-1).